The chain runs to 454 residues: Gastrin/cholecystokinin type B receptor (454 aa).

At 1 to 57 (MELLKPNRSVLGSGPGPGASLCRSGGPLLNGSGTGNLSCEPPRIRGAGTRELELAIR) the chain is on the extracellular side. N-linked (GlcNAc...) asparagine glycans are attached at residues asparagine 7, asparagine 30, and asparagine 36. The helical transmembrane segment at 58-79 (VTLYAVIFLMSVGGNVLIIVVL) threads the bilayer. The Cytoplasmic segment spans residues 80 to 87 (GLSRRLRT). The helical transmembrane segment at 88-109 (VTNAFLLSLAVSDLLLAVACMP) threads the bilayer. Residues 110–131 (FTLLPNLMGTFIFGTVVCKAVS) are Extracellular-facing. Cysteines 127 and 205 form a disulfide. The chain crosses the membrane as a helical span at residues 132-150 (YFMGVSVSVSTLSLVAIAL). At 151–170 (ERYSAICRPLQARVWQTRSH) the chain is on the cytoplasmic side. A helical transmembrane segment spans residues 171 to 189 (AARVIVATWMLSGLLMVPY). The Extracellular portion of the chain corresponds to 190 to 219 (PVYTAVQPAGPRVLQCMHRWPSARVRQTWS). A helical transmembrane segment spans residues 220-242 (VLLLLLLFFVPGVVMAVAYGLIS). At 243-340 (RELYLGLRFD…KLLAKKRVVR (98 aa)) the chain is on the cytoplasmic side. The tract at residues 257–284 (SESQSRVGSQGGLPGGTGQGPAQANGRC) is disordered. Residues 265–275 (SQGGLPGGTGQ) show a composition bias toward gly residues. A helical membrane pass occupies residues 341-362 (MLLVIVVLFFLCWLPVYSANTW). The Extracellular portion of the chain corresponds to 363–380 (RAFDGPGAHRALSGAPIS). The helical transmembrane segment at 381–401 (FIHLLTYASACVNPLVYCFMH) threads the bilayer. The Cytoplasmic segment spans residues 402–454 (RRFRQACLDTCTRCCPRPPRARPRPLPDEDPPTPSIASLSRLSYTTISTLGPG). The S-palmitoyl cysteine moiety is linked to residue cysteine 415. The tract at residues 422-441 (ARPRPLPDEDPPTPSIASLS) is disordered.

Belongs to the G-protein coupled receptor 1 family.

It localises to the cell membrane. In terms of biological role, receptor for gastrin and cholecystokinin. The CCK-B receptors occur throughout the central nervous system where they modulate anxiety, analgesia, arousal, and neuroleptic activity. This receptor mediates its action by association with G proteins that activate a phosphatidylinositol-calcium second messenger system. This is Gastrin/cholecystokinin type B receptor (CCKBR) from Bos taurus (Bovine).